Reading from the N-terminus, the 210-residue chain is MVIAIDGPAASGKGTLARRLAQHYGLPHLDTGLLYRAVALALLDAERDLRDEAAAEAAARTLRAESLGDARLRERAMGEAASLVSALPAVRAALLDWQRRFAAAPGGAVLDGRDIGTVVCPDAPVKLFITASPEERAHRRHRELGGRGEPVAFEAVLADIVRRDARDADRAAAPLRVADDAVVIDTTALDAEAAFRAAAAVVEARWPGRG.

7–15 (GPAASGKGT) contacts ATP.

Belongs to the cytidylate kinase family. Type 1 subfamily.

It is found in the cytoplasm. The catalysed reaction is CMP + ATP = CDP + ADP. It carries out the reaction dCMP + ATP = dCDP + ADP. This chain is Cytidylate kinase, found in Methylobacterium sp. (strain 4-46).